A 1061-amino-acid polypeptide reads, in one-letter code: Ceruloplasmin (1061 aa).

Positions 1–19 are cleaved as a signal peptide; it reads MKFLLLSTFIFLYSSLALA. Plastocyanin-like domains follow at residues 20-199, 208-356, 369-555, 565-713, 725-895, and 903-1057; these read RDKH…LILC, KEKN…VRDC, HVRH…MKIC, RQKD…VNQC, GERT…LIVC, and FSPK…VEQE. Residues tyrosine 55, glycine 64, and tyrosine 67 each coordinate Na(+). The Cu(2+) site is built by histidine 120 and histidine 122. Histidine 120 contributes to the O2 binding site. Lysine 128 is a Ca(2+) binding site. Residue asparagine 138 is glycosylated (N-linked (GlcNAc...) asparagine). Ca(2+)-binding residues include glutamine 143, aspartate 146, and aspartate 147. Cysteine 173 and cysteine 199 are disulfide-bonded. Residues histidine 179 and histidine 181 each coordinate Cu(2+). Histidine 179 is an O2 binding site. Asparagine 226 carries N-linked (GlcNAc...) asparagine glycosylation. Serine 255 lines the Na(+) pocket. An intrachain disulfide couples cysteine 275 to cysteine 356. Positions 294, 337, and 342 each coordinate Cu(2+). Asparagine 396 is a glycosylation site (N-linked (GlcNAc...) asparagine). Residues phenylalanine 407, glycine 416, and tyrosine 419 each coordinate Na(+). Cysteine 529 and cysteine 555 form a disulfide bridge. Asparagine 583 is a glycosylation site (N-linked (GlcNAc...) asparagine). Na(+) is bound at residue serine 612. An intrachain disulfide couples cysteine 632 to cysteine 713. Residues histidine 651, cysteine 694, histidine 699, and methionine 704 each contribute to the Cu(2+) site. Cysteine 694 serves as the catalytic Nucleophile; for glutathione peroxidase activity. N-linked (GlcNAc...) asparagine glycosylation is present at asparagine 757. Positions 762, 771, and 774 each coordinate Na(+). A disulfide bridge connects residues cysteine 869 and cysteine 895. N-linked (GlcNAc...) asparagine glycosylation is present at asparagine 921. Serine 950 is a Na(+) binding site. Positions 989, 992, 994, 1034, 1035, 1036, 1040, and 1045 each coordinate Cu(2+). O2-binding residues include histidine 992 and histidine 994. Histidine 1036 contacts O2.

It belongs to the multicopper oxidase family. As to quaternary structure, found in a complex with MPO and LTF; interacts directly with MPO and LTF, which allows Fe(3+) incorporation into LTF, activation of CP ferroxidase activity and protection of CP antioxidant properties by MPO. Cu(2+) is required as a cofactor. In terms of tissue distribution, expressed in many tissues, including liver, eye and brain.

It is found in the secreted. It carries out the reaction 4 Fe(2+) + O2 + 4 H(+) = 4 Fe(3+) + 2 H2O. It catalyses the reaction 4 Cu(+) + O2 + 4 H(+) = 4 Cu(2+) + 2 H2O. The enzyme catalyses a hydroperoxide + 2 glutathione = an alcohol + glutathione disulfide + H2O. The catalysed reaction is 4 nitric oxide + O2 + 2 H2O = 4 nitrite + 4 H(+). It carries out the reaction 2 glutathione + H2O2 = glutathione disulfide + 2 H2O. Multifunctional blue, copper-binding (6-7 atoms per molecule) glycoprotein. It has ferroxidase activity oxidizing Fe(2+) to Fe(3+) without releasing radical oxygen species. It is involved in iron transport across the cell membrane. Copper ions provide a large number of enzymatic activites. Oxidizes highly toxic ferrous ions to the ferric state for further incorporation onto apo-transferrins, catalyzes Cu(+) oxidation and promotes the oxidation of biogenic amines such as norepinephrin and serotonin. Provides Cu(2+) ions for the ascorbate-mediated deaminase degradation of the heparan sulfate chains of GPC1. Has glutathione peroxidase-like activity, can remove both hydrogen peroxide and lipid hydroperoxide in the presence of thiols. Also shows NO-oxidase and NO2 synthase activities that determine endocrine NO homeostasis. In Mus musculus (Mouse), this protein is Ceruloplasmin (Cp).